A 277-amino-acid polypeptide reads, in one-letter code: Shikimate dehydrogenase (NADP(+)) (277 aa).

Shikimate contacts are provided by residues 15–17 (SLS) and threonine 62. Lysine 66 acts as the Proton acceptor in catalysis. Asparagine 87 and aspartate 102 together coordinate shikimate. Residues 127–131 (GAGGA), 151–156 (NRTVSK), and isoleucine 219 contribute to the NADP(+) site. Tyrosine 221 is a binding site for shikimate. Glycine 242 contacts NADP(+).

It belongs to the shikimate dehydrogenase family. In terms of assembly, homodimer.

It catalyses the reaction shikimate + NADP(+) = 3-dehydroshikimate + NADPH + H(+). The protein operates within metabolic intermediate biosynthesis; chorismate biosynthesis; chorismate from D-erythrose 4-phosphate and phosphoenolpyruvate: step 4/7. Functionally, involved in the biosynthesis of the chorismate, which leads to the biosynthesis of aromatic amino acids. Catalyzes the reversible NADPH linked reduction of 3-dehydroshikimate (DHSA) to yield shikimate (SA). This is Shikimate dehydrogenase (NADP(+)) from Geobacillus sp. (strain WCH70).